A 396-amino-acid chain; its full sequence is Putative nickel insertion protein (396 aa).

Positions 333 to 355 (RSKLARESQTVETPDGPAKGKTV) are disordered.

This sequence belongs to the LarC family.

The chain is Putative nickel insertion protein from Rhodopirellula baltica (strain DSM 10527 / NCIMB 13988 / SH1).